The primary structure comprises 503 residues: Anthranilate synthase component 1 3 (503 aa).

L-tryptophan is bound at residue 269-271 (PYS). 304-305 (GT) contributes to the chorismate binding site. Glutamate 331 serves as a coordination point for Mg(2+). Chorismate contacts are provided by residues tyrosine 419, arginine 439, 453–455 (GSG), and glycine 455. Glutamate 468 is a binding site for Mg(2+).

It belongs to the anthranilate synthase component I family. In terms of assembly, tetramer of two components I and two components II. Mg(2+) serves as cofactor.

It carries out the reaction chorismate + L-glutamine = anthranilate + pyruvate + L-glutamate + H(+). Its pathway is amino-acid biosynthesis; L-tryptophan biosynthesis; L-tryptophan from chorismate: step 1/5. In Haloarcula marismortui (strain ATCC 43049 / DSM 3752 / JCM 8966 / VKM B-1809) (Halobacterium marismortui), this protein is Anthranilate synthase component 1 3 (trpE3).